An 811-amino-acid polypeptide reads, in one-letter code: TLR4 interactor with leucine rich repeats (811 aa).

The signal sequence occupies residues 1-25 (MEGVGAVRFWLVVCGCLAFPPRAES). The LRRNT domain maps to 26 to 57 (VCPERCDCQHPQHLLCTNRGLRAVPKTSSLPS). Over 26–696 (VCPERCDCQH…AGGRGGVDYQ (671 aa)) the chain is Extracellular. LRR repeat units follow at residues 61 to 81 (VLTYSLGGNFITNITAFDFHR), 84 to 105 (QLRRLDLQYNQIRSLHPKTFEK), 108 to 129 (RLEELYLGNNLLQALAPGTLAP), 132 to 153 (KLRILYANGNEIGRLSRGSFEG), 156 to 177 (SLVKLRLDGNVLGALPDAVFAP), 180 to 201 (NLLYLHLEANRIRFLGKNAFTQ), 204 to 223 (KLRFLNLSANELQPSLRHAA), 230 to 251 (SLSTLILSANSLQHLGPRVFQH), 254 to 275 (RLGLLSLSGNQLTHLAPEAFWG), 278 to 298 (ALRELRLEGNRLNQLPLTLLE), 302 to 323 (SLEALDLSGNELSALHPATFGH), and 326 to 347 (RLRELSLRDNALSALSGDIFAA). Asn-73 carries an N-linked (GlcNAc...) asparagine glycan. Residues 359–416 (NGWTCDCRLRGLKRWMGNWHSQGRLLTVFVQCRHPPALRGKYLDYLDDQLLQNGSCVD) enclose the LRRCT domain. An N-linked (GlcNAc...) asparagine glycan is attached at Asn-411. Disordered stretches follow at residues 414–460 (CVDP…QQRG) and 486–562 (RRGP…QQGR). A compositionally biased stretch (polar residues) spans 421–430 (PTAGSRQWPI). 2 stretches are compositionally biased toward low complexity: residues 440 to 460 (PPAGLAQELPLQPQPQPQQRG) and 494 to 508 (QSPSAAAASGSAPQS). Positions 510–519 (DLHEKPERGR) are enriched in basic and acidic residues. A compositionally biased stretch (polar residues) spans 524–545 (NLPQTEPTPTSEPASGTPSARD). Asn-589 carries an N-linked (GlcNAc...) asparagine glycan. The chain crosses the membrane as a helical span at residues 697–717 (LLTLVLLAINALLVLLALAAW). Residues 718–809 (GSRWLRRKLR…RREDHLLQRF (92 aa)) lie on the Cytoplasmic side of the membrane. Phosphoserine is present on Ser-798.

Belongs to the lipopolysaccharide (LPS) receptor, a multi-protein complex containing at least CD14, MD-2 and TLR4. Interacts with TLR4; this interaction is greatly enhanced following LPS stimulation. Interacts with LPS. Post-translationally, N-glycolysaled. Highly expressed in cortical astrocytes and in cerebellar granule neurons.

Its subcellular location is the membrane. Functionally, component of the TLR4 signaling complex. Mediates the innate immune response to bacterial lipopolysaccharide (LPS) leading to cytokine secretion and the inflammatory response. The chain is TLR4 interactor with leucine rich repeats (Tril) from Rattus norvegicus (Rat).